A 376-amino-acid polypeptide reads, in one-letter code: MTEEPEFSLGVEEEYLLVDAETGDLREAPDALMEACKAELADQVGPEFLRCQIEIGTPVAADVAQARDHLARLRGSIARHAAEFGLAPISVACHPVADWRAQGRTDKDRYNQISQEMGGVARRMLICGMHVHVGISDKDMRIDLMNQFSWFLPHLLALSASSPFWLGEDTLLASYRTTVFAGYPRTGLPPRLGSWAEFDRSVEMLTETGIIQDASKIWWDLRPSARFPTLETRVCDACPRLDDAITLVALVQATLRMLWRLSRQNLRWRQYDNFLLGENRWRATRYGSTEGLIDFGSRRILPFDEIAESWLAAIAEDADALDSQPAVAGLRDMIARGSAAERQRALFASAITAGATPQEAFRSIVGWLIDEFRRDL.

This sequence belongs to the glutamate--cysteine ligase type 2 family. YbdK subfamily.

The enzyme catalyses L-cysteine + L-glutamate + ATP = gamma-L-glutamyl-L-cysteine + ADP + phosphate + H(+). In terms of biological role, ATP-dependent carboxylate-amine ligase which exhibits weak glutamate--cysteine ligase activity. This chain is Putative glutamate--cysteine ligase 2, found in Paracoccus denitrificans (strain Pd 1222).